A 330-amino-acid chain; its full sequence is DNA-directed RNA polymerase subunit alpha (330 aa).

The segment at 1-229 is alpha N-terminal domain (alpha-NTD); the sequence is MKNLKFIKPF…DHFNVLVELS (229 aa). The tract at residues 245–330 is alpha C-terminal domain (alpha-CTD); the sequence is AHNYVLDLEI…HSVEEDKDKH (86 aa).

The protein belongs to the RNA polymerase alpha chain family. Homodimer. The RNAP catalytic core consists of 2 alpha, 1 beta, 1 beta' and 1 omega subunit. When a sigma factor is associated with the core the holoenzyme is formed, which can initiate transcription.

It carries out the reaction RNA(n) + a ribonucleoside 5'-triphosphate = RNA(n+1) + diphosphate. In terms of biological role, DNA-dependent RNA polymerase catalyzes the transcription of DNA into RNA using the four ribonucleoside triphosphates as substrates. The chain is DNA-directed RNA polymerase subunit alpha from Aster yellows witches'-broom phytoplasma (strain AYWB).